Consider the following 758-residue polypeptide: G-protein alpha subunit activating protein gbas-1 (758 aa).

Residues 30–48 (LDEVDNADFEREDDEEEVL) show a composition bias toward acidic residues. Residues 30–70 (LDEVDNADFEREDDEEEVLSEPSESPYTSTPKSSKRVNKTR) form a disordered region. Positions 49-61 (SEPSESPYTSTPK) are enriched in low complexity. The GBA signature appears at 653-666 (ETVTVEEFLMNSYS). The tract at residues 668-690 (AAPSTSTAPAPPKAPVTAPPAPQ) is disordered. A compositionally biased stretch (pro residues) spans 676–689 (PAPPKAPVTAPPAP).

In terms of assembly, interacts (via GBA motif) with guanine nucleotide-binding protein G(o) subunit alpha goa-1 (in GDP-bound form); the interaction leads to activation of goa-1. Expressed in some neurons including the head and tail neurons, HSN and VC, in a subset of glial cells, in the distal tips cells and in the intestine.

Acts as a non-receptor guanine nucleotide exchange factor which binds to and activates G-protein alpha subunit goa-1. This Caenorhabditis elegans protein is G-protein alpha subunit activating protein gbas-1.